An 821-amino-acid polypeptide reads, in one-letter code: ATP-dependent Clp protease ATP-binding subunit ClpA homolog (821 aa).

In terms of domain architecture, Clp R spans 2 to 144 (FERFTEKAIK…RAEVIQMLGE (143 aa)). 2 repeat regions span residues 5–70 (FTEK…IGRG) and 80–144 (FTPR…MLGE). ATP contacts are provided by residues 210–217 (GEPGVGKT) and 549–556 (GPTGVGKT).

It belongs to the ClpA/ClpB family.

It is found in the plastid. Its subcellular location is the chloroplast. May interact with a ClpP-like protease involved in degradation of denatured proteins in the chloroplast. The polypeptide is ATP-dependent Clp protease ATP-binding subunit ClpA homolog (clpC) (Porphyra purpurea (Red seaweed)).